The primary structure comprises 572 residues: Urease subunit alpha (572 aa).

One can recognise a Urease domain in the interval 133–572 (GGIDLHVHYI…TSLSQRYFLF (440 aa)). Ni(2+) is bound by residues His-138, His-140, and Lys-221. Position 221 is an N6-carboxylysine (Lys-221). His-223 provides a ligand contact to substrate. Ni(2+) is bound by residues His-250 and His-276. Catalysis depends on His-324, which acts as the Proton donor. Residue Asp-364 coordinates Ni(2+).

The protein belongs to the metallo-dependent hydrolases superfamily. Urease alpha subunit family. Heterotrimer of UreA (gamma), UreB (beta) and UreC (alpha) subunits. Three heterotrimers associate to form the active enzyme. The cofactor is Ni cation. In terms of processing, carboxylation allows a single lysine to coordinate two nickel ions.

It localises to the cytoplasm. It catalyses the reaction urea + 2 H2O + H(+) = hydrogencarbonate + 2 NH4(+). The protein operates within nitrogen metabolism; urea degradation; CO(2) and NH(3) from urea (urease route): step 1/1. Its function is as follows. Ureolysis may allow urea to be employed as a nitrogen source for growth and produces ammonia which may protect from killing at low pH. This Streptococcus salivarius (strain 57.I) protein is Urease subunit alpha.